Consider the following 209-residue polypeptide: MALLAEHLLKPLPADRQIETGPFLEAVAHLPPFFDCLGSPVFTPIKADISGNITKIKAVYDTDPAKFKTLQNILEVEKGMYGAEWPKVGATLALLWLKRGLRFIQVFLQSICDGERDENHPNLIRVNANKAYEMALKKYHGWLVQKIFKAALYAAPYKSDFLKALSKGQNVTEEECLEKIRLFLVNYTATIDAIYEMYTKMNAELDYTV.

At alanine 2 the chain carries N-acetylalanine. 2 repeat units span residues 45–55 (IKADISGNITK) and 56–66 (IKAVYDTDPAK). The interval 45–66 (IKADISGNITKIKAVYDTDPAK) is 2 X 12 AA approximate tandem repeats. A beta-D-galactosyl-(1-&gt;4)-beta-D-glucosyl-(1&lt;-&gt;1)-N-[(9Z)-octadecenoyl]-sphing-4-enine-binding site is contributed by 48–55 (DISGNITK). 2 residues coordinate beta-D-galactosyl-(1-&gt;4)-beta-D-glucosyl-(1&lt;-&gt;1)-N-[(9Z)-octadecenoyl]-sphing-4-enine: histidine 140 and tyrosine 207.

Belongs to the GLTP family. As to quaternary structure, monomer.

It is found in the cytoplasm. Its function is as follows. Accelerates the intermembrane transfer of various glycolipids. Catalyzes the transfer of various glycosphingolipids between membranes but does not catalyze the transfer of phospholipids. May be involved in the intracellular translocation of glucosylceramides. The chain is Glycolipid transfer protein (GLTP) from Rattus norvegicus (Rat).